The primary structure comprises 316 residues: Uracil-DNA glycosylase (316 aa).

The span at 36-79 shows a compositional bias: low complexity; sequence AAAAAPAGAGAGASKPARPSAAARPAKGTPAASAATTATGADAS. The interval 36–91 is disordered; the sequence is AAAAAPAGAGAGASKPARPSAAARPAKGTPAASAATTATGADASAPPPDPGAPTWD. The Proton acceptor role is filled by Asp-159.

The protein belongs to the uracil-DNA glycosylase (UDG) superfamily. UNG family.

The protein resides in the host nucleus. It catalyses the reaction Hydrolyzes single-stranded DNA or mismatched double-stranded DNA and polynucleotides, releasing free uracil.. Excises uracil residues from the DNA which can arise as a result of misincorporation of dUMP residues by DNA polymerase or deamination of cytosines. Therefore may reduce deleterious uracil incorporation into the viral genome, particularly in terminally differentiated cells which lack DNA repair enzymes. The sequence is that of Uracil-DNA glycosylase (UL2) from Sus scrofa (Pig).